The chain runs to 375 residues: 1-deoxy-D-xylulose 5-phosphate reductoisomerase (375 aa).

NADPH-binding residues include threonine 10, glycine 11, serine 12, valine 13, lysine 37, and asparagine 114. Lysine 115 lines the 1-deoxy-D-xylulose 5-phosphate pocket. Residue glutamate 116 participates in NADPH binding. A Mn(2+)-binding site is contributed by aspartate 136. Serine 137, glutamate 138, serine 162, and histidine 185 together coordinate 1-deoxy-D-xylulose 5-phosphate. Residue glutamate 138 participates in Mn(2+) binding. Glycine 191 contributes to the NADPH binding site. Positions 198, 203, 204, and 207 each coordinate 1-deoxy-D-xylulose 5-phosphate. Position 207 (glutamate 207) interacts with Mn(2+).

This sequence belongs to the DXR family. Mg(2+) is required as a cofactor. Mn(2+) serves as cofactor.

The enzyme catalyses 2-C-methyl-D-erythritol 4-phosphate + NADP(+) = 1-deoxy-D-xylulose 5-phosphate + NADPH + H(+). It functions in the pathway isoprenoid biosynthesis; isopentenyl diphosphate biosynthesis via DXP pathway; isopentenyl diphosphate from 1-deoxy-D-xylulose 5-phosphate: step 1/6. Its function is as follows. Catalyzes the NADPH-dependent rearrangement and reduction of 1-deoxy-D-xylulose-5-phosphate (DXP) to 2-C-methyl-D-erythritol 4-phosphate (MEP). This chain is 1-deoxy-D-xylulose 5-phosphate reductoisomerase, found in Sulfurihydrogenibium sp. (strain YO3AOP1).